A 320-amino-acid polypeptide reads, in one-letter code: Cytochrome f (320 aa).

The signal sequence occupies residues 1–35 (MQTRKTLSWIKEEITRSISLSLMLSIITHASLSNA). Tyrosine 36, cysteine 56, cysteine 59, and histidine 60 together coordinate heme. Residues 286 to 306 (VQGLLFFLTSVLLAQIFLVLK) traverse the membrane as a helical segment.

Belongs to the cytochrome f family. As to quaternary structure, the 4 large subunits of the cytochrome b6-f complex are cytochrome b6, subunit IV (17 kDa polypeptide, petD), cytochrome f and the Rieske protein, while the 4 small subunits are PetG, PetL, PetM and PetN. The complex functions as a dimer. The cofactor is heme.

It is found in the plastid. Its subcellular location is the chloroplast thylakoid membrane. Component of the cytochrome b6-f complex, which mediates electron transfer between photosystem II (PSII) and photosystem I (PSI), cyclic electron flow around PSI, and state transitions. The polypeptide is Cytochrome f (Pelargonium hortorum (Common geranium)).